A 698-amino-acid chain; its full sequence is Colicin V secretion/processing ATP-binding protein CvaB (698 aa).

A Peptidase C39 domain is found at 26-145 (QTETAECGLA…RYFTGVALEV (120 aa)). The active site involves cysteine 32. A run of 7 helical transmembrane segments spans residues 33–53 (GLAC…LIYL), 92–112 (VLKT…LVSV), 176–196 (LAKI…MPVG), 211–231 (GLLT…AATS), 289–311 (TSVI…MLLY), 315–334 (LTWI…LVTY), and 412–432 (IVIL…IGMF). An ABC transmembrane type-1 domain is found at 176–458 (LAKIFCLSVV…LTSFLLQLRI (283 aa)). The ABC transporter domain maps to 492-698 (LETNGLSYRY…LRTVDRVISI (207 aa)). 526 to 533 (GASGAGKT) is a binding site for ATP.

It belongs to the ABC transporter superfamily. Colicin V exporter (TC 3.A.1.110.2) family.

It is found in the cell membrane. Functionally, involved, in conjunction with CvaA, in the secretion of colicin V. The polypeptide is Colicin V secretion/processing ATP-binding protein CvaB (cvaB) (Escherichia coli).